Reading from the N-terminus, the 280-residue chain is Mevalonyl-coenzyme A hydratase SIDH (280 aa).

The PTS1-type peroxisomal targeting signal motif lies at 278–280; the sequence is SKL.

This sequence belongs to the enoyl-CoA hydratase/isomerase family.

The protein localises to the peroxisome. It participates in siderophore biosynthesis. Functionally, mevalonyl-coenzyme A hydratase; part of the gene cluster that mediates the biosynthesis of at least 11 siderophores, including beauverichelin A, dimerumic acid (DA), Na-dimethyl coprogen (NADC), eleutherazine B, ferricrocin (FC), fusarinine A, fusarinine C (FsC), metachelin A, mevalonolactone, rhodotorulic acid (RA) and tenellin. This cocktail of siderophores for iron metabolism is essential for virulence, and more specifically for the fungal virulence in penetrating through the host cuticle. Siderophore synthesis is also involved in conidial germination under iron-deficient conditions. For biosynthesis of fusarinine C, the transacylase SIDF transfers anhydromevalonyl to N(5)-hydroxyornithine. The required anhydromevalonyl-CoA moiety is derived from mevalonate by CoA ligation and dehydration catalyzed by SIDI and sidH respectively. SIDH is not essential for siderophore production, probably due to functional redundancy of this protein family, as there are 15 homologs of SIDH in B.bassiana. This Beauveria bassiana (strain ARSEF 2860) (White muscardine disease fungus) protein is Mevalonyl-coenzyme A hydratase SIDH.